A 365-amino-acid chain; its full sequence is Cyclin-D5-2 (365 aa).

This sequence belongs to the cyclin family. Cyclin D subfamily.

The polypeptide is Cyclin-D5-2 (CYCD5-2) (Oryza sativa subsp. japonica (Rice)).